Consider the following 104-residue polypeptide: Large ribosomal subunit protein bL21 (104 aa).

This sequence belongs to the bacterial ribosomal protein bL21 family. In terms of assembly, part of the 50S ribosomal subunit. Contacts protein L20.

Its function is as follows. This protein binds to 23S rRNA in the presence of protein L20. This chain is Large ribosomal subunit protein bL21, found in Lactococcus lactis subsp. cremoris (strain MG1363).